Here is a 242-residue protein sequence, read N- to C-terminus: Probable septum site-determining protein MinC (242 aa).

Residues 120-135 (APKKVEEKPAEPEHKP) show a composition bias toward basic and acidic residues. Residues 120 to 144 (APKKVEEKPAEPEHKPSRIVTSPVR) are disordered.

Belongs to the MinC family. As to quaternary structure, interacts with MinD and FtsZ.

Cell division inhibitor that blocks the formation of polar Z ring septums. Rapidly oscillates between the poles of the cell to destabilize FtsZ filaments that have formed before they mature into polar Z rings. Prevents FtsZ polymerization. This is Probable septum site-determining protein MinC from Ectopseudomonas mendocina (strain ymp) (Pseudomonas mendocina).